The sequence spans 274 residues: Orotidine 5'-phosphate decarboxylase (274 aa).

Lysine 96 acts as the Proton donor in catalysis.

This sequence belongs to the OMP decarboxylase family. Type 2 subfamily.

It carries out the reaction orotidine 5'-phosphate + H(+) = UMP + CO2. The protein operates within pyrimidine metabolism; UMP biosynthesis via de novo pathway; UMP from orotate: step 2/2. This chain is Orotidine 5'-phosphate decarboxylase, found in Bacteroides fragilis (strain ATCC 25285 / DSM 2151 / CCUG 4856 / JCM 11019 / LMG 10263 / NCTC 9343 / Onslow / VPI 2553 / EN-2).